A 173-amino-acid polypeptide reads, in one-letter code: 6,7-dimethyl-8-ribityllumazine synthase (173 aa).

5-amino-6-(D-ribitylamino)uracil contacts are provided by residues F24, 58 to 60, and 82 to 84; these read ALE and AVI. 87 to 88 lines the (2S)-2-hydroxy-3-oxobutyl phosphate pocket; the sequence is ET. H90 functions as the Proton donor in the catalytic mechanism. N115 is a 5-amino-6-(D-ribitylamino)uracil binding site. Residue R129 participates in (2S)-2-hydroxy-3-oxobutyl phosphate binding. Residues 150-173 are disordered; the sequence is TLDQLSDDEEDEEDEDDEDEEERA. Acidic residues predominate over residues 154–173; it reads LSDDEEDEEDEDDEDEEERA.

It belongs to the DMRL synthase family.

The enzyme catalyses (2S)-2-hydroxy-3-oxobutyl phosphate + 5-amino-6-(D-ribitylamino)uracil = 6,7-dimethyl-8-(1-D-ribityl)lumazine + phosphate + 2 H2O + H(+). It participates in cofactor biosynthesis; riboflavin biosynthesis; riboflavin from 2-hydroxy-3-oxobutyl phosphate and 5-amino-6-(D-ribitylamino)uracil: step 1/2. Its function is as follows. Catalyzes the formation of 6,7-dimethyl-8-ribityllumazine by condensation of 5-amino-6-(D-ribitylamino)uracil with 3,4-dihydroxy-2-butanone 4-phosphate. This is the penultimate step in the biosynthesis of riboflavin. The chain is 6,7-dimethyl-8-ribityllumazine synthase from Burkholderia mallei (strain NCTC 10247).